Consider the following 257-residue polypeptide: RING1 and YY1-binding protein B (257 aa).

Disordered stretches follow at residues 1–24 (MGDKKSPTRPKRQAKPTADNGFWD) and 45–257 (RKGT…DESF). The segment at 19-48 (DNGFWDCSVCTFRNSAEAFKCSICDVRKGT) adopts a RanBP2-type zinc-finger fold. A compositionally biased stretch (basic and acidic residues) spans 74–129 (PKKEKKEKPERPEKDRAEEERPDINPPDEHPVEQRDKDKSEKEQPEKEKKDREKEI). Polar residues predominate over residues 149 to 168 (HQSPPSERNSIQSGKSTTKT). Positions 169-178 (KNSHNSRPKL) are enriched in basic residues. Residues 209–233 (TSSTSSSTVTSSASSEQQHQSSGSE) show a composition bias toward low complexity.

The protein resides in the nucleus. The protein localises to the cytoplasm. May be implicated in the regulation of the transcription as a repressor of the transcriptional activity of E4TF1. The polypeptide is RING1 and YY1-binding protein B (rybpb) (Danio rerio (Zebrafish)).